A 198-amino-acid polypeptide reads, in one-letter code: Holliday junction branch migration complex subunit RuvA (198 aa).

The tract at residues 1-64 (MYEYIKGEYM…EDFIGLYGFE (64 aa)) is domain I. The domain II stretch occupies residues 65 to 143 (SLEELDMFKL…SDELLNCIDE (79 aa)). The interval 144–154 (FDDVTQDNSLA) is flexible linker. The tract at residues 154–198 (ALSEALSALISLGYTEKEAEKVLKDVDKSESVENIIKSALVKLMG) is domain III.

It belongs to the RuvA family. Homotetramer. Forms an RuvA(8)-RuvB(12)-Holliday junction (HJ) complex. HJ DNA is sandwiched between 2 RuvA tetramers; dsDNA enters through RuvA and exits via RuvB. An RuvB hexamer assembles on each DNA strand where it exits the tetramer. Each RuvB hexamer is contacted by two RuvA subunits (via domain III) on 2 adjacent RuvB subunits; this complex drives branch migration. In the full resolvosome a probable DNA-RuvA(4)-RuvB(12)-RuvC(2) complex forms which resolves the HJ.

Its subcellular location is the cytoplasm. Functionally, the RuvA-RuvB-RuvC complex processes Holliday junction (HJ) DNA during genetic recombination and DNA repair, while the RuvA-RuvB complex plays an important role in the rescue of blocked DNA replication forks via replication fork reversal (RFR). RuvA specifically binds to HJ cruciform DNA, conferring on it an open structure. The RuvB hexamer acts as an ATP-dependent pump, pulling dsDNA into and through the RuvAB complex. HJ branch migration allows RuvC to scan DNA until it finds its consensus sequence, where it cleaves and resolves the cruciform DNA. This is Holliday junction branch migration complex subunit RuvA from Clostridium botulinum (strain Alaska E43 / Type E3).